A 384-amino-acid polypeptide reads, in one-letter code: Polar flagellin C (384 aa).

A coiled-coil region spans residues 317–347 (AKQNRLSHSINNLANIQENVDASNSRIKDTD).

It belongs to the bacterial flagellin family. Heteromer of multiple flagellin subunits including FlaA, FlaB/D, FlaC, FlaE and FlaF. Homomer of FlaC is not able to form a functional filament.

The protein resides in the secreted. The protein localises to the bacterial flagellum. Flagellin is the subunit protein which polymerizes to form the filaments of bacterial flagella. FlaC is not essential for polar flagellar synthesis and swimming motility. Homomer of FlaC is not able to form a functional filament. This Vibrio parahaemolyticus serotype O3:K6 (strain RIMD 2210633) protein is Polar flagellin C (flaC).